Reading from the N-terminus, the 341-residue chain is Phospholipid phosphatase homolog 1.2 homolog (341 aa).

The next 3 helical transmembrane spans lie at L30–V50, I71–V91, and L122–V142. N-linked (GlcNAc...) asparagine glycosylation is present at N162. 2 consecutive transmembrane segments (helical) span residues R223–S243 and V257–F277. Disordered stretches follow at residues S284 to R308 and F322 to A341. Residues R299–R308 are compositionally biased toward basic and acidic residues.

Belongs to the PA-phosphatase related phosphoesterase family.

The protein localises to the membrane. In Caenorhabditis elegans, this protein is Phospholipid phosphatase homolog 1.2 homolog.